A 209-amino-acid chain; its full sequence is Large ribosomal subunit protein uL3 (209 aa).

Positions 126–165 (HNFGGGSRTHGQSDRLRAPGSVGGSSDPSRTFRGTRMAGR) are disordered.

Belongs to the universal ribosomal protein uL3 family. In terms of assembly, part of the 50S ribosomal subunit. Forms a cluster with proteins L14 and L19.

Its function is as follows. One of the primary rRNA binding proteins, it binds directly near the 3'-end of the 23S rRNA, where it nucleates assembly of the 50S subunit. This chain is Large ribosomal subunit protein uL3, found in Chlorobium limicola (strain DSM 245 / NBRC 103803 / 6330).